The sequence spans 1793 residues: Protein TIC 214 (1793 aa).

6 helical membrane-spanning segments follow: residues 11 to 31 (LVSL…YYGF), 64 to 84 (FITG…HIAL), 90 to 112 (ITVI…NFLN), 129 to 149 (IFFQ…SSIL), 172 to 192 (VGWL…LVWI), and 222 to 242 (IFLI…PPIY). A disordered region spans residues 1504–1524 (DIEEDYGESDSKKGGKDKNKK).

It belongs to the TIC214 family. In terms of assembly, part of the Tic complex.

The protein localises to the plastid. Its subcellular location is the chloroplast inner membrane. In terms of biological role, involved in protein precursor import into chloroplasts. May be part of an intermediate translocation complex acting as a protein-conducting channel at the inner envelope. The protein is Protein TIC 214 of Lotus japonicus (Lotus corniculatus var. japonicus).